Reading from the N-terminus, the 280-residue chain is Biotin carboxyl carrier protein of acetyl-CoA carboxylase 1, chloroplastic (280 aa).

The transit peptide at 1-82 (MASSSFSVTS…SNAAKVDGPS (82 aa)) directs the protein to the chloroplast. Residues 52 to 75 (PSRSSYPVVKAQSNKVSTGASSNA) are compositionally biased toward polar residues. 2 disordered regions span residues 52–106 (PSRS…ATEE) and 164–215 (QPSY…GTFY). Positions 177–188 (PAAAAPAPSTPA) are enriched in low complexity. The segment covering 189–198 (SLPPPSPPTP) has biased composition (pro residues). The Biotinyl-binding domain occupies 203-279 (LPTVKSPMAG…SLDTPLFVVQ (77 aa)). K245 carries the N6-biotinyllysine modification.

As to quaternary structure, acetyl-CoA carboxylase is a heterohexamer composed of biotin carboxyl carrier protein, biotin carboxylase and 2 subunits each of ACCase subunit alpha and ACCase plastid-coded subunit beta (accD). In terms of tissue distribution, present in developing tissues from roots, leaves, flowers, siliques and seeds (at protein level).

Its subcellular location is the plastid. The protein localises to the chloroplast. The protein operates within lipid metabolism; fatty acid biosynthesis. In terms of biological role, this protein is a component of the acetyl coenzyme A carboxylase complex; first, biotin carboxylase catalyzes the carboxylation of the carrier protein and then the transcarboxylase transfers the carboxyl group to form malonyl-CoA. The sequence is that of Biotin carboxyl carrier protein of acetyl-CoA carboxylase 1, chloroplastic (BCCP1) from Arabidopsis thaliana (Mouse-ear cress).